The chain runs to 431 residues: Enolase (431 aa).

Q167 lines the (2R)-2-phosphoglycerate pocket. E209 serves as the catalytic Proton donor. Residues D246, E289, and D316 each contribute to the Mg(2+) site. 4 residues coordinate (2R)-2-phosphoglycerate: K341, R370, S371, and K392. K341 acts as the Proton acceptor in catalysis.

This sequence belongs to the enolase family. As to quaternary structure, component of the RNA degradosome, a multiprotein complex involved in RNA processing and mRNA degradation. Mg(2+) is required as a cofactor.

It localises to the cytoplasm. It is found in the secreted. Its subcellular location is the cell surface. It carries out the reaction (2R)-2-phosphoglycerate = phosphoenolpyruvate + H2O. It participates in carbohydrate degradation; glycolysis; pyruvate from D-glyceraldehyde 3-phosphate: step 4/5. Functionally, catalyzes the reversible conversion of 2-phosphoglycerate (2-PG) into phosphoenolpyruvate (PEP). It is essential for the degradation of carbohydrates via glycolysis. In Shewanella sp. (strain ANA-3), this protein is Enolase.